The sequence spans 208 residues: Dephospho-CoA kinase (208 aa).

Positions 5 to 201 constitute a DPCK domain; sequence IVALTGGIGS…QRYLALAASA (197 aa). Residue 13–18 coordinates ATP; the sequence is GSGKST.

It belongs to the CoaE family.

The protein resides in the cytoplasm. The catalysed reaction is 3'-dephospho-CoA + ATP = ADP + CoA + H(+). Its pathway is cofactor biosynthesis; coenzyme A biosynthesis; CoA from (R)-pantothenate: step 5/5. Its function is as follows. Catalyzes the phosphorylation of the 3'-hydroxyl group of dephosphocoenzyme A to form coenzyme A. The polypeptide is Dephospho-CoA kinase (Sodalis glossinidius (strain morsitans)).